The sequence spans 235 residues: Pyridoxine 5'-phosphate synthase (235 aa).

Asn7 provides a ligand contact to 3-amino-2-oxopropyl phosphate. Position 9–10 (9–10) interacts with 1-deoxy-D-xylulose 5-phosphate; that stretch reads DH. Arg18 is a 3-amino-2-oxopropyl phosphate binding site. His43 functions as the Proton acceptor in the catalytic mechanism. Residues Arg45 and His50 each contribute to the 1-deoxy-D-xylulose 5-phosphate site. Glu70 serves as the catalytic Proton acceptor. Thr100 is a 1-deoxy-D-xylulose 5-phosphate binding site. The active-site Proton donor is the His187. 3-amino-2-oxopropyl phosphate contacts are provided by residues Gly188 and 209 to 210; that span reads GH.

It belongs to the PNP synthase family. Homooctamer; tetramer of dimers.

It is found in the cytoplasm. It carries out the reaction 3-amino-2-oxopropyl phosphate + 1-deoxy-D-xylulose 5-phosphate = pyridoxine 5'-phosphate + phosphate + 2 H2O + H(+). It functions in the pathway cofactor biosynthesis; pyridoxine 5'-phosphate biosynthesis; pyridoxine 5'-phosphate from D-erythrose 4-phosphate: step 5/5. Its function is as follows. Catalyzes the complicated ring closure reaction between the two acyclic compounds 1-deoxy-D-xylulose-5-phosphate (DXP) and 3-amino-2-oxopropyl phosphate (1-amino-acetone-3-phosphate or AAP) to form pyridoxine 5'-phosphate (PNP) and inorganic phosphate. The sequence is that of Pyridoxine 5'-phosphate synthase from Desulfatibacillum aliphaticivorans.